The following is a 403-amino-acid chain: Dual-specificity RNA methyltransferase RlmN (403 aa).

Glu-121 acts as the Proton acceptor in catalysis. A Radical SAM core domain is found at 127-375 (ETDRGTLCVS…VRTPRGRDIL (249 aa)). A disulfide bridge links Cys-134 with Cys-378. Cys-141, Cys-145, and Cys-148 together coordinate [4Fe-4S] cluster. Residues 204–205 (GE), Ser-236, 258–260 (SLH), and Asn-335 each bind S-adenosyl-L-methionine. The active-site S-methylcysteine intermediate is the Cys-378.

The protein belongs to the radical SAM superfamily. RlmN family. Requires [4Fe-4S] cluster as cofactor.

It localises to the cytoplasm. It catalyses the reaction adenosine(2503) in 23S rRNA + 2 reduced [2Fe-2S]-[ferredoxin] + 2 S-adenosyl-L-methionine = 2-methyladenosine(2503) in 23S rRNA + 5'-deoxyadenosine + L-methionine + 2 oxidized [2Fe-2S]-[ferredoxin] + S-adenosyl-L-homocysteine. It carries out the reaction adenosine(37) in tRNA + 2 reduced [2Fe-2S]-[ferredoxin] + 2 S-adenosyl-L-methionine = 2-methyladenosine(37) in tRNA + 5'-deoxyadenosine + L-methionine + 2 oxidized [2Fe-2S]-[ferredoxin] + S-adenosyl-L-homocysteine. Specifically methylates position 2 of adenine 2503 in 23S rRNA and position 2 of adenine 37 in tRNAs. m2A2503 modification seems to play a crucial role in the proofreading step occurring at the peptidyl transferase center and thus would serve to optimize ribosomal fidelity. In Rhodopseudomonas palustris (strain BisA53), this protein is Dual-specificity RNA methyltransferase RlmN.